A 160-amino-acid chain; its full sequence is MTQRLLRLSLAHYRKDSCTEESCHYFGTALHAKQAATLHAKHGTLQYYQVYSTQAARDALDAFRRSLGADWTIDQHDLTVELYIRDLQTLRNIAADPEFASFYHLEEPYLSRRHVVASLGWVEAYVEEGKVVNVTDEGSEYRPGFGEFVGSGGELEKALA.

The 77-residue stretch at 24–100 (HYFGTALHAK…RNIAADPEFA (77 aa)) folds into the EthD domain.

Belongs to the tpcK family.

Putative oxygenase; part of the gene cluster that mediates the biosynthesis of isoflavipucine. The PKS part of the PKS-NRPS ATEG_00325 probably assembles a triketide from an acetyl starter and two malonyl-CoA extender units. The poly-beta-keto intermediate would then be fused to the leucine unit by the NRPS part. The resulting amide would be liberated from the PKS-NRPS through reductive release of the linear PKS-NRPS product from the enzyme complex. Further steps in isoflapucine synthesis include a cyclization step, an oxidation step, a hydrolysis step involving a trans-amidation, and an additional oxidation step, leading to flavipucine. Formation of isoflavipucine from flavipucine requires an unusual rearrangement. Alternative rearrangement reactions could build up rubrobramide, representing a branching of flavipucine biosynthesis. The enzymes involved in the post-PKS-NRPS steps have not been identified yet, but the putative oxygenases ATEG_003329 and ATEG_00330 encoded by the cluster could play a role. The protein is Putative oxygenase ATEG_00330 of Aspergillus terreus (strain NIH 2624 / FGSC A1156).